The chain runs to 129 residues: Histone H2A-IV (129 aa).

Residues 1–22 (MSGRGKQGGKARAKAKSRSSRA) are disordered. At Ser2 the chain carries N-acetylserine. Residue Ser2 is modified to Phosphoserine. N6-(2-hydroxyisobutyryl)lysine is present on Lys6. N6-acetyllysine occurs at positions 6 and 10. Residues 7 to 19 (QGGKARAKAKSRS) are compositionally biased toward basic residues. N6-(2-hydroxyisobutyryl)lysine; alternate is present on Lys10. Lys10 bears the N6-lactoyllysine; alternate mark. Residue Lys10 is modified to N6-succinyllysine. Glycyl lysine isopeptide (Lys-Gly) (interchain with G-Cter in ubiquitin) cross-links involve residues Lys14 and Lys16. The residue at position 37 (Lys37) is an N6-(2-hydroxyisobutyryl)lysine; alternate. N6-(2-hydroxyisobutyryl)lysine occurs at positions 75 and 76. Lys96 bears the N6-(2-hydroxyisobutyryl)lysine; alternate mark. The residue at position 96 (Lys96) is an N6-succinyllysine. At Lys96 the chain carries N6-glutaryllysine; alternate. Lys100 carries the post-translational modification N6-glutaryllysine. Gln105 is modified (N5-methylglutamine). Lys119 bears the N6-(2-hydroxyisobutyryl)lysine; alternate mark. Lys119 and Lys120 each carry N6-glutaryllysine; alternate. Lys120 is covalently cross-linked (Glycyl lysine isopeptide (Lys-Gly) (interchain with G-Cter in ubiquitin)).

This sequence belongs to the histone H2A family. In terms of assembly, the nucleosome is a histone octamer containing two molecules each of H2A, H2B, H3 and H4 assembled in one H3-H4 heterotetramer and two H2A-H2B heterodimers. The octamer wraps approximately 147 bp of DNA. Monoubiquitination of Lys-120 (H2AK119Ub) gives a specific tag for epigenetic transcriptional repression. Following DNA double-strand breaks (DSBs), it is ubiquitinated through 'Lys-63' linkage of ubiquitin moieties, leading to the recruitment of repair proteins to sites of DNA damage. H2AK119Ub and ionizing radiation-induced 'Lys-63'-linked ubiquitination are distinct events. In terms of processing, phosphorylation on Ser-2 is enhanced during mitosis. Phosphorylation on Ser-2 directly represses transcription. Post-translationally, glutamine methylation at Gln-105 (H2AQ104me) by FBL is specifically dedicated to polymerase I. It is present at 35S ribosomal DNA locus and impairs binding of the FACT complex.

It is found in the nucleus. It localises to the chromosome. Core component of nucleosome. Nucleosomes wrap and compact DNA into chromatin, limiting DNA accessibility to the cellular machineries which require DNA as a template. Histones thereby play a central role in transcription regulation, DNA repair, DNA replication and chromosomal stability. DNA accessibility is regulated via a complex set of post-translational modifications of histones, also called histone code, and nucleosome remodeling. The sequence is that of Histone H2A-IV from Gallus gallus (Chicken).